A 382-amino-acid chain; its full sequence is Methylthioribose-1-phosphate isomerase (382 aa).

Aspartate 257 (proton donor) is an active-site residue.

The protein belongs to the eIF-2B alpha/beta/delta subunits family. MtnA subfamily.

The protein localises to the cytoplasm. It is found in the nucleus. It carries out the reaction 5-(methylsulfanyl)-alpha-D-ribose 1-phosphate = 5-(methylsulfanyl)-D-ribulose 1-phosphate. It participates in amino-acid biosynthesis; L-methionine biosynthesis via salvage pathway; L-methionine from S-methyl-5-thio-alpha-D-ribose 1-phosphate: step 1/6. Its function is as follows. Catalyzes the interconversion of methylthioribose-1-phosphate (MTR-1-P) into methylthioribulose-1-phosphate (MTRu-1-P). This chain is Methylthioribose-1-phosphate isomerase, found in Paracoccidioides brasiliensis (strain Pb18).